The chain runs to 119 residues: Large ribosomal subunit protein bL17 (119 aa).

The protein belongs to the bacterial ribosomal protein bL17 family. In terms of assembly, part of the 50S ribosomal subunit. Contacts protein L32.

This chain is Large ribosomal subunit protein bL17, found in Mycoplasma mycoides subsp. mycoides SC (strain CCUG 32753 / NCTC 10114 / PG1).